Consider the following 446-residue polypeptide: MAHVITRINAREILDSRGNPTVEVDLETTLGIFRAAVPSGASTGIYEALELRDNDKSRYLGKGVQQAIKNINEIIAPKLIGLDCREQKKIDNMMVQELDGSKTEWGWSKSKLGANAILAISMAICRAGAAANKTSLYKYLAQLAGKNTEKMILPVPCLNVINGGSHAGNKLSFQEFMIVPVGAPSFKEAMRYGAEVYHTLKSEIKKKYGIDATNVGDEGGFAPNILNAHEALDLLVASIKKAGYENKVKIAMDVAASEFYNIETKTYDLDFKTPNNDKSLVKTGQELVDLYIELVKKYPIISIEDPFDQDDWENYAKLTEAIGKDVQIVGDDLLVTNPTRIEKALEKKACNALLLKVNQIGSITEAIEACLLSQKNNWGVMVSHRSGETEDVFIADLVVALRTGQIKTGAPCRSERNAKYNQLFRIEESLGANGSFAGDKFRLQLN.

Position 42 (Ser-42) interacts with Mg(2+). Ser-42 carries the phosphoserine modification. The short motif at 104 to 108 is the Pentapeptide insert element; that stretch reads EWGWS. The residue at position 133 (Lys-133) is an N6-acetyllysine. Lys-138 participates in a covalent cross-link: Glycyl lysine isopeptide (Lys-Gly) (interchain with G-Cter in ubiquitin). Phosphotyrosine is present on Tyr-139. Residues His-166 and Glu-175 each coordinate substrate. Catalysis depends on Glu-218, which acts as the Proton donor. Asp-253 is a Mg(2+) binding site. The DKSLVK motif motif lies at 277-282; sequence DKSLVK. Mg(2+) is bound by residues Glu-304 and Asp-331. Substrate is bound by residues Glu-304 and Asp-331. At Thr-339 the chain carries Phosphothreonine. Catalysis depends on Lys-356, which acts as the Proton acceptor. N6-acetyllysine is present on Lys-375. Residues 383-386 and Lys-407 contribute to the substrate site; that span reads SHRS.

The protein belongs to the enolase family. As to quaternary structure, homodimer. Forms a complex at least composed of DegP, ENO and HSP70. Interacts with G-actin. Interacts (via the DKSLVK motif) with mammalian host PLG/plasminogen (present in the mosquito blood meal); the interaction occurs at the ookinete cell surface and is required for ookinete invasion of the mosquito midgut. Interacts with A.gambiae EBP; depending on the Plasmodium species, the interaction is either involved in ookinete invasion of the mosquito midgut (P.berghei) or is dispensable (P.falciparum). Mg(2+) is required as a cofactor.

The protein resides in the cytoplasm. Its subcellular location is the nucleus. It is found in the cytoskeleton. The protein localises to the cell surface. It localises to the cell membrane. The protein resides in the vacuole. The catalysed reaction is (2R)-2-phosphoglycerate = phosphoenolpyruvate + H2O. Its pathway is carbohydrate degradation; glycolysis; pyruvate from D-glyceraldehyde 3-phosphate: step 4/5. Its function is as follows. Glycolytic enzyme that catalyzes the conversion of 2-phosphoglycerate to phosphoenolpyruvate. In addition to glycolysis, involved in various processes such as parasite development and invasion. Plays an essential role during ookinete invasion of the mosquito vector midgut by mediating the interaction of the ookinete with the midgut epithelium and, further, by binding to mammalian host plasminogen in the blood meal, whose conversion to active plasmin promotes the invasion process. The polypeptide is Enolase (Plasmodium berghei (strain Anka)).